The following is a 286-amino-acid chain: Putative sensory transducer protein YfmS (286 aa).

The Methyl-accepting transducer domain maps to 68–286 (ITDAIRSNQK…KMAEKALEEE (219 aa)).

This sequence belongs to the methyl-accepting chemotaxis (MCP) protein family.

Chemotactic-signal transducers respond to changes in the concentration of attractants and repellents in the environment, transduce a signal from the outside to the inside of the cell, and facilitate sensory adaptation through the variation of the level of methylation. Attractants increase the level of methylation while repellents decrease the level of methylation. The polypeptide is Putative sensory transducer protein YfmS (yfmS) (Bacillus subtilis (strain 168)).